Here is a 98-residue protein sequence, read N- to C-terminus: C-C motif chemokine 19 (98 aa).

The first 21 residues, 1 to 21 (MALLLALSLLVLWTSPAPTLS), serve as a signal peptide directing secretion. 2 cysteine pairs are disulfide-bonded: C29/C55 and C30/C71.

It belongs to the intercrine beta (chemokine CC) family. In terms of assembly, interacts with TNFAIP6 (via Link domain). In terms of tissue distribution, expressed at high levels in the lymph nodes, thymus and appendix. Intermediate levels seen in colon and trachea, while low levels found in spleen, small intestine, lung, kidney and stomach.

Its subcellular location is the secreted. May play a role not only in inflammatory and immunological responses but also in normal lymphocyte recirculation and homing. May play an important role in trafficking of T-cells in thymus, and T-cell and B-cell migration to secondary lymphoid organs. Binds to chemokine receptor CCR7. Recombinant CCL19 shows potent chemotactic activity for T-cells and B-cells but not for granulocytes and monocytes. Binds to atypical chemokine receptor ACKR4 and mediates the recruitment of beta-arrestin (ARRB1/2) to ACKR4. This chain is C-C motif chemokine 19 (CCL19), found in Homo sapiens (Human).